The primary structure comprises 341 residues: S-adenosylmethionine:tRNA ribosyltransferase-isomerase (341 aa).

The protein belongs to the QueA family. In terms of assembly, monomer.

It is found in the cytoplasm. It carries out the reaction 7-aminomethyl-7-carbaguanosine(34) in tRNA + S-adenosyl-L-methionine = epoxyqueuosine(34) in tRNA + adenine + L-methionine + 2 H(+). Its pathway is tRNA modification; tRNA-queuosine biosynthesis. Functionally, transfers and isomerizes the ribose moiety from AdoMet to the 7-aminomethyl group of 7-deazaguanine (preQ1-tRNA) to give epoxyqueuosine (oQ-tRNA). This is S-adenosylmethionine:tRNA ribosyltransferase-isomerase from Acetivibrio thermocellus (strain ATCC 27405 / DSM 1237 / JCM 9322 / NBRC 103400 / NCIMB 10682 / NRRL B-4536 / VPI 7372) (Clostridium thermocellum).